The chain runs to 896 residues: Translation initiation factor IF-2 (896 aa).

A disordered region spans residues 49–310 (LKKEHGDTSG…MQQGFDKSAT (262 aa)). Residues 57 to 66 (SGETEPTRLT) show a composition bias toward polar residues. Composition is skewed to basic and acidic residues over residues 101–174 (STIE…KDMN), 184–240 (AKKE…KSAD), and 250–263 (REAE…DEKA). The segment covering 284 to 295 (RNQRGRGGKGKL) has biased composition (basic residues). Residues 395-564 (GRAPVVTIMG…LLQSEVLELT (170 aa)) enclose the tr-type G domain. Positions 404 to 411 (GHVDHGKT) are G1. 404-411 (GHVDHGKT) contributes to the GTP binding site. The segment at 429–433 (GITQH) is G2. Residues 450–453 (DTPG) are G3. Residues 450 to 454 (DTPGH) and 504 to 507 (NKID) contribute to the GTP site. Residues 504-507 (NKID) are G4. The interval 540-542 (SAK) is G5.

Belongs to the TRAFAC class translation factor GTPase superfamily. Classic translation factor GTPase family. IF-2 subfamily.

It localises to the cytoplasm. In terms of biological role, one of the essential components for the initiation of protein synthesis. Protects formylmethionyl-tRNA from spontaneous hydrolysis and promotes its binding to the 30S ribosomal subunits. Also involved in the hydrolysis of GTP during the formation of the 70S ribosomal complex. The protein is Translation initiation factor IF-2 of Vibrio atlanticus (strain LGP32) (Vibrio splendidus (strain Mel32)).